Consider the following 905-residue polypeptide: Heme/hemopexin-binding protein (905 aa).

The signal sequence occupies residues 1-21; sequence MYKLNVISLIILTTYTGATYA.

The protein localises to the secreted. Its function is as follows. Binds heme/hemopexin complexes. The sequence is that of Heme/hemopexin-binding protein (hxuA) from Haemophilus influenzae (strain ATCC 51907 / DSM 11121 / KW20 / Rd).